The chain runs to 214 residues: Probable transaldolase (214 aa).

Lysine 83 functions as the Schiff-base intermediate with substrate in the catalytic mechanism.

The protein belongs to the transaldolase family. Type 3B subfamily.

It is found in the cytoplasm. The enzyme catalyses D-sedoheptulose 7-phosphate + D-glyceraldehyde 3-phosphate = D-erythrose 4-phosphate + beta-D-fructose 6-phosphate. The protein operates within carbohydrate degradation; pentose phosphate pathway; D-glyceraldehyde 3-phosphate and beta-D-fructose 6-phosphate from D-ribose 5-phosphate and D-xylulose 5-phosphate (non-oxidative stage): step 2/3. Its function is as follows. Transaldolase is important for the balance of metabolites in the pentose-phosphate pathway. This Leptospira borgpetersenii serovar Hardjo-bovis (strain JB197) protein is Probable transaldolase.